A 469-amino-acid chain; its full sequence is Ubiquitin carboxyl-terminal hydrolase MINDY-1 (469 aa).

A disordered region spans residues 1–105; sequence MEHHQPEHPA…RLQELPQSPR (105 aa). The span at 23–44 shows a compositional bias: basic and acidic residues; the sequence is ENHKVLSEPKEHPQDKDAKEAD. At serine 103 the chain carries Phosphoserine. The Nucleophile role is filled by cysteine 137. The Proton acceptor role is filled by histidine 319. Residues 388–428 are ubiquitin-binding domain (UBD); sequence QVDQDYLIALSLQQQQPPPQGTSGLSDLELAQQLQQEEYQQ. The tract at residues 401–469 is disordered; sequence QQQPPPQGTS…PKQESDCVLL (69 aa). Residues 415–448 are compositionally biased toward low complexity; sequence LELAQQLQQEEYQQHQAAQAAPARAPSPQGRGAA. Serine 441 is modified (phosphoserine). Basic and acidic residues predominate over residues 453-469; the sequence is AAERRQRPKQESDCVLL.

Belongs to the MINDY deubiquitinase family. FAM63 subfamily.

The catalysed reaction is Thiol-dependent hydrolysis of ester, thioester, amide, peptide and isopeptide bonds formed by the C-terminal Gly of ubiquitin (a 76-residue protein attached to proteins as an intracellular targeting signal).. Its function is as follows. Hydrolase that can specifically remove 'Lys-48'-linked conjugated ubiquitin from proteins. Has exodeubiquitinase activity and has a preference for long polyubiquitin chains. May play a regulatory role at the level of protein turnover. The protein is Ubiquitin carboxyl-terminal hydrolase MINDY-1 (MINDY1) of Bos taurus (Bovine).